A 111-amino-acid polypeptide reads, in one-letter code: Ribonuclease P protein component 1 (111 aa).

It belongs to the eukaryotic/archaeal RNase P protein component 1 family. As to quaternary structure, consists of a catalytic RNA component and at least 4-5 protein subunits.

It is found in the cytoplasm. The enzyme catalyses Endonucleolytic cleavage of RNA, removing 5'-extranucleotides from tRNA precursor.. Its function is as follows. Part of ribonuclease P, a protein complex that generates mature tRNA molecules by cleaving their 5'-ends. This chain is Ribonuclease P protein component 1, found in Hyperthermus butylicus (strain DSM 5456 / JCM 9403 / PLM1-5).